The chain runs to 343 residues: Probable beta-1,3-galactosyltransferase 13 (343 aa).

The helical; Signal-anchor for type II membrane protein transmembrane segment at 22-42 (LIVFTSLAIGLTGFLFGLSTI) threads the bilayer. Asn265 is a glycosylation site (N-linked (GlcNAc...) asparagine).

This sequence belongs to the glycosyltransferase 31 family. Requires Mn(2+) as cofactor.

The protein resides in the golgi apparatus membrane. The protein operates within protein modification; protein glycosylation. Functionally, beta-1,3-galactosyltransferase that transfers galactose from UDP-galactose to substrates with a terminal glycosyl residue. This chain is Probable beta-1,3-galactosyltransferase 13 (B3GALT13), found in Arabidopsis thaliana (Mouse-ear cress).